We begin with the raw amino-acid sequence, 302 residues long: uncharacterized protein (302 aa).

Transmembrane regions (helical) follow at residues 10–30 (VLSV…GVLG), 65–85 (LVLI…IAYL), 102–122 (VAAA…GIFG), 130–150 (IFYD…LSHI), 162–182 (AVFF…LWGL), 190–210 (ILGY…GLTL), 224–244 (LVSG…SYVL), 251–271 (FSVT…VLAI), and 282–302 (SCIF…SVVL).

It belongs to the auxin efflux carrier (TC 2.A.69) family.

Its subcellular location is the cell membrane. This is an uncharacterized protein from Methanothermobacter thermautotrophicus (strain ATCC 29096 / DSM 1053 / JCM 10044 / NBRC 100330 / Delta H) (Methanobacterium thermoautotrophicum).